The following is a 472-amino-acid chain: uncharacterized protein (472 aa).

This sequence belongs to the AllG family.

This is an uncharacterized protein from Escherichia coli (strain K12).